Consider the following 416-residue polypeptide: Gamma-glutamyl phosphate reductase (416 aa).

Belongs to the gamma-glutamyl phosphate reductase family.

It is found in the cytoplasm. It catalyses the reaction L-glutamate 5-semialdehyde + phosphate + NADP(+) = L-glutamyl 5-phosphate + NADPH + H(+). Its pathway is amino-acid biosynthesis; L-proline biosynthesis; L-glutamate 5-semialdehyde from L-glutamate: step 2/2. In terms of biological role, catalyzes the NADPH-dependent reduction of L-glutamate 5-phosphate into L-glutamate 5-semialdehyde and phosphate. The product spontaneously undergoes cyclization to form 1-pyrroline-5-carboxylate. This Leptospira borgpetersenii serovar Hardjo-bovis (strain JB197) protein is Gamma-glutamyl phosphate reductase.